Here is a 98-residue protein sequence, read N- to C-terminus: Small ribosomal subunit protein uS19 (98 aa).

Positions 77–98 are disordered; that stretch reads TRTFRGHAGGKAEKGGSAPRKK.

The protein belongs to the universal ribosomal protein uS19 family.

Its function is as follows. Protein S19 forms a complex with S13 that binds strongly to the 16S ribosomal RNA. This chain is Small ribosomal subunit protein uS19, found in Chlorobium limicola (strain DSM 245 / NBRC 103803 / 6330).